The chain runs to 258 residues: Acyl-[acyl-carrier-protein]--UDP-N-acetylglucosamine O-acyltransferase (258 aa).

It belongs to the transferase hexapeptide repeat family. LpxA subfamily. In terms of assembly, homotrimer.

It localises to the cytoplasm. The catalysed reaction is a (3R)-hydroxyacyl-[ACP] + UDP-N-acetyl-alpha-D-glucosamine = a UDP-3-O-[(3R)-3-hydroxyacyl]-N-acetyl-alpha-D-glucosamine + holo-[ACP]. Its pathway is glycolipid biosynthesis; lipid IV(A) biosynthesis; lipid IV(A) from (3R)-3-hydroxytetradecanoyl-[acyl-carrier-protein] and UDP-N-acetyl-alpha-D-glucosamine: step 1/6. In terms of biological role, involved in the biosynthesis of lipid A, a phosphorylated glycolipid that anchors the lipopolysaccharide to the outer membrane of the cell. This is Acyl-[acyl-carrier-protein]--UDP-N-acetylglucosamine O-acyltransferase from Syntrophobacter fumaroxidans (strain DSM 10017 / MPOB).